We begin with the raw amino-acid sequence, 526 residues long: CTP synthase (526 aa).

The interval 1 to 270 (MKYIFVTGGV…ADVLSTHLGL (270 aa)) is amidoligase domain. S12 contacts CTP. S12 is a binding site for UTP. ATP is bound by residues 13–18 (GLGKGI) and D70. D70 and E145 together coordinate Mg(2+). Residues 152–154 (DIE), 191–196 (KTKPTQ), and K227 contribute to the CTP site. Residues 191–196 (KTKPTQ) and K227 contribute to the UTP site. In terms of domain architecture, Glutamine amidotransferase type-1 spans 293–525 (VAIVSKYGIE…VEACRANKRT (233 aa)). Residue G349 participates in L-glutamine binding. C376 (nucleophile; for glutamine hydrolysis) is an active-site residue. L-glutamine contacts are provided by residues 377–380 (LGFQ), E400, and R455. Catalysis depends on residues H498 and E500.

It belongs to the CTP synthase family. In terms of assembly, homotetramer.

It carries out the reaction UTP + L-glutamine + ATP + H2O = CTP + L-glutamate + ADP + phosphate + 2 H(+). It catalyses the reaction L-glutamine + H2O = L-glutamate + NH4(+). The catalysed reaction is UTP + NH4(+) + ATP = CTP + ADP + phosphate + 2 H(+). It functions in the pathway pyrimidine metabolism; CTP biosynthesis via de novo pathway; CTP from UDP: step 2/2. With respect to regulation, allosterically activated by GTP, when glutamine is the substrate; GTP has no effect on the reaction when ammonia is the substrate. The allosteric effector GTP functions by stabilizing the protein conformation that binds the tetrahedral intermediate(s) formed during glutamine hydrolysis. Inhibited by the product CTP, via allosteric rather than competitive inhibition. Its function is as follows. Catalyzes the ATP-dependent amination of UTP to CTP with either L-glutamine or ammonia as the source of nitrogen. Regulates intracellular CTP levels through interactions with the four ribonucleotide triphosphates. The sequence is that of CTP synthase from Methanoregula boonei (strain DSM 21154 / JCM 14090 / 6A8).